The sequence spans 78 residues: Acyl carrier protein (78 aa).

The Carrier domain occupies 2 to 77 (DELFLRMRAL…DAYEFIKSKV (76 aa)). S37 bears the O-(pantetheine 4'-phosphoryl)serine mark.

This sequence belongs to the acyl carrier protein (ACP) family. Post-translationally, 4'-phosphopantetheine is transferred from CoA to a specific serine of apo-ACP by AcpS. This modification is essential for activity because fatty acids are bound in thioester linkage to the sulfhydryl of the prosthetic group.

It is found in the cytoplasm. The protein operates within lipid metabolism; fatty acid biosynthesis. Its function is as follows. Carrier of the growing fatty acid chain in fatty acid biosynthesis. The polypeptide is Acyl carrier protein (Treponema pallidum (strain Nichols)).